Reading from the N-terminus, the 421-residue chain is Imidazolonepropionase (421 aa).

Positions 81 and 83 each coordinate Fe(3+). Zn(2+) contacts are provided by H81 and H83. Residues R90, Y153, and H186 each coordinate 4-imidazolone-5-propanoate. Y153 provides a ligand contact to N-formimidoyl-L-glutamate. Residue H251 participates in Fe(3+) binding. Residue H251 coordinates Zn(2+). Position 254 (E254) interacts with 4-imidazolone-5-propanoate. D326 is a Fe(3+) binding site. Residue D326 coordinates Zn(2+). Residues N328 and G330 each contribute to the N-formimidoyl-L-glutamate site. A 4-imidazolone-5-propanoate-binding site is contributed by S331.

This sequence belongs to the metallo-dependent hydrolases superfamily. HutI family. Zn(2+) serves as cofactor. The cofactor is Fe(3+).

The protein resides in the cytoplasm. The catalysed reaction is 4-imidazolone-5-propanoate + H2O = N-formimidoyl-L-glutamate. Its pathway is amino-acid degradation; L-histidine degradation into L-glutamate; N-formimidoyl-L-glutamate from L-histidine: step 3/3. Catalyzes the hydrolytic cleavage of the carbon-nitrogen bond in imidazolone-5-propanoate to yield N-formimidoyl-L-glutamate. It is the third step in the universal histidine degradation pathway. In Streptococcus pyogenes serotype M28 (strain MGAS6180), this protein is Imidazolonepropionase.